The chain runs to 107 residues: Hydrogenase expression/formation protein HoxL (107 aa).

The protein belongs to the HupF/HypC family.

This Cupriavidus necator (strain ATCC 17699 / DSM 428 / KCTC 22496 / NCIMB 10442 / H16 / Stanier 337) (Ralstonia eutropha) protein is Hydrogenase expression/formation protein HoxL (hoxL).